The following is a 370-amino-acid chain: Adaptive-response sensory kinase SasA (370 aa).

In terms of domain architecture, Histidine kinase spans 152–365 (MVAHELRTPL…CFYLTVPVWQ (214 aa)). H155 bears the Phosphohistidine; by autocatalysis mark.

In terms of assembly, homooligomerizes. Interacts with KaiC. Participates in the KaiBC complex, whose core is composed of a KaiC homohexamer and 6 KaiB.

It carries out the reaction ATP + protein L-histidine = ADP + protein N-phospho-L-histidine.. In terms of biological role, member of the two-component regulatory system SasA/RpaA involved in genome-wide circadian gene expression. One of several clock output pathways. Participates in the Kai clock protein complex, the main circadian regulator in cyanobacteria, via its interaction with KaiC. KaiC enhances the autophosphorylation activity of SasA, which then transfers its phosphate group to RpaA to activate it. In addition to its output function, recruits fold-shifted KaiB (KaiB(fs)) to KaiC to cooperatively form the KaiB(6):KaiC(6) complex (independent of SasA kinase activity). Required for robustness of the circadian rhythm of gene expression and is involved in clock output, also required for adaptation to light/dark cycles. In Prochlorococcus marinus (strain MIT 9313), this protein is Adaptive-response sensory kinase SasA.